Here is a 674-residue protein sequence, read N- to C-terminus: Forkhead box protein P1 (674 aa).

Residues 1-19 (MMQESGTETKSNGSAIQNG) are compositionally biased toward polar residues. The disordered stretch occupies residues 1-44 (MMQESGTETKSNGSAIQNGSSGGNHLLECGSLREGRSNGETPAV). Ser-82 carries the post-translational modification Phosphoserine. Residues 269–281 (MNPHASTNGQLSV) show a composition bias toward polar residues. The segment at 269–296 (MNPHASTNGQLSVHTPKRESLSHEEHPH) is disordered. Positions 284–296 (PKRESLSHEEHPH) are enriched in basic and acidic residues. Lys-285 is covalently cross-linked (Glycyl lysine isopeptide (Lys-Gly) (interchain with G-Cter in SUMO2)). The segment at 304 to 329 (GVCKWPGCEAVCEDFQSFLKHLNSEH) adopts a C2H2-type zinc-finger fold. The tract at residues 346–367 (VQQLELQLAKDKERLQAMMTHL) is leucine-zipper. Glycyl lysine isopeptide (Lys-Gly) (interchain with G-Cter in SUMO2) cross-links involve residues Lys-370 and Lys-375. The CTBP1-binding stretch occupies residues 380-384 (PLNLV). Residues 388–401 (TLSKSASEASPQSL) are compositionally biased toward polar residues. Residues 388 to 427 (TLSKSASEASPQSLPHTPTTPTAPITPATQGPSVITTTSM) are disordered. Over residues 402–419 (PHTPTTPTAPITPATQGP) the composition is skewed to low complexity. Lys-440 is covalently cross-linked (Glycyl lysine isopeptide (Lys-Gly) (interchain with G-Cter in SUMO2)). The segment at residues 462–552 (RPPFTYASLI…PQKISGNPSL (91 aa)) is a DNA-binding region (fork-head). Residues 608 to 674 (EHTNSNESDS…EDEPVNEDME (67 aa)) are disordered. Positions 609-620 (HTNSNESDSSPG) are enriched in polar residues. Thr-650 carries the phosphothreonine modification. Ser-655 bears the Phosphoserine mark. The span at 664–674 (YEDEPVNEDME) shows a compositional bias: acidic residues.

Forms homodimers and heterodimers with FOXP2 and FOXP4. Dimerization is required for DNA-binding. Self-associates. Interacts with CTBP1. Interacts with NCOR2 and AR. Interacts with FOXP2. Interacts with TBR1. Interacts with AURKA; this interaction facilitates the phosphorylation of FOXP1, which suppresses the expression of FBXL7. Interacts with ZMYM2.

The protein resides in the nucleus. Its function is as follows. Transcriptional repressor. Can act with CTBP1 to synergistically repress transcription but CTPBP1 is not essential. Plays an important role in the specification and differentiation of lung epithelium. Acts cooperatively with FOXP4 to regulate lung secretory epithelial cell fate and regeneration by restricting the goblet cell lineage program; the function may involve regulation of AGR2. Essential transcriptional regulator of B-cell development. Involved in regulation of cardiac muscle cell proliferation. Involved in the columnar organization of spinal motor neurons. Promotes the formation of the lateral motor neuron column (LMC) and the preganglionic motor column (PGC) and is required for respective appropriate motor axon projections. The segment-appropriate generation of spinal cord motor columns requires cooperation with other Hox proteins. Can regulate PITX3 promoter activity; may promote midbrain identity in embryonic stem cell-derived dopamine neurons by regulating PITX3. Negatively regulates the differentiation of T follicular helper cells T(FH)s. Involved in maintenance of hair follicle stem cell quiescence; the function probably involves regulation of FGF18. Represses transcription of various pro-apoptotic genes and cooperates with NF-kappa B-signaling in promoting B-cell expansion by inhibition of caspase-dependent apoptosis. Binds to CSF1R promoter elements and is involved in regulation of monocyte differentiation and macrophage functions; repression of CSF1R in monocytes seems to involve NCOR2 as corepressor. Involved in endothelial cell proliferation, tube formation and migration indicative for a role in angiogenesis; the role in neovascularization seems to implicate suppression of SEMA5B. Can negatively regulate androgen receptor signaling. Acts as a transcriptional activator of the FBXL7 promoter; this activity is regulated by AURKA. The protein is Forkhead box protein P1 (FOXP1) of Bos taurus (Bovine).